The sequence spans 261 residues: Lys-63-specific deubiquitinase BRCC36 (261 aa).

Positions 6 to 149 (VHIQGDAFLV…YTCFQSVQAQ (144 aa)) constitute an MPN domain. 3 residues coordinate Zn(2+): histidine 92, histidine 94, and aspartate 105. Residues 92–105 (HSHPHITVWPSHVD) carry the JAMM motif motif.

Belongs to the peptidase M67A family. BRCC36 subfamily. Component of the BRCA1-A complex, at least composed of brca1, bard1, uimc1/rap80, abraxas1, brcc3/brcc36, babam2 and babam1/nba1. In the BRCA1-A complex, interacts directly with abraxas1 and babam2. Component of the BRISC complex, at least composed of abraxas2, brcc3/brcc36, babam2 and babam1/nba1. Within the complex, interacts directly with abraxas2. Both the BRCA1-A complex and the BRISC complex bind polyubiquitin. Zn(2+) is required as a cofactor.

It is found in the nucleus. The protein localises to the cytoplasm. The protein resides in the cytoskeleton. Its subcellular location is the spindle pole. In terms of biological role, metalloprotease that specifically cleaves 'Lys-63'-linked polyubiquitin chains. Does not have activity toward 'Lys-48'-linked polyubiquitin chains. Component of the BRCA1-A complex, a complex that specifically recognizes 'Lys-63'-linked ubiquitinated histones H2A and H2AX at DNA lesions sites, leading to target the brca1-bard1 heterodimer to sites of DNA damage at double-strand breaks (DSBs). In the BRCA1-A complex, it specifically removes 'Lys-63'-linked ubiquitin on histones H2A and H2AX, antagonizing the rnf8-dependent ubiquitination at double-strand breaks (DSBs). Catalytic subunit of the BRISC complex, a multiprotein complex that specifically cleaves 'Lys-63'-linked ubiquitin in various substrates. Mediates the specific 'Lys-63'-specific deubiquitination associated with the COP9 signalosome complex (CSN), via the interaction of the BRISC complex with the CSN complex. The BRISC complex is required for normal mitotic spindle assembly and microtubule attachment to kinetochores via its role in deubiquitinating numa1. Plays a role in interferon signaling via its role in the deubiquitination of the interferon receptor ifnar1; deubiquitination increases ifnar1 activity by enhancing its stability and cell surface expression. Acts as a regulator of the NLRP3 inflammasome by mediating deubiquitination of nlrp3. Down-regulates the response to bacterial lipopolysaccharide (LPS) via its role in ifnar1 deubiquitination. The polypeptide is Lys-63-specific deubiquitinase BRCC36 (brcc3) (Xenopus tropicalis (Western clawed frog)).